A 603-amino-acid polypeptide reads, in one-letter code: Arginine--tRNA ligase (603 aa).

Positions 143-153 (PNIAKEMHVGH) match the 'HIGH' region motif.

The protein belongs to the class-I aminoacyl-tRNA synthetase family. As to quaternary structure, monomer.

Its subcellular location is the cytoplasm. It catalyses the reaction tRNA(Arg) + L-arginine + ATP = L-arginyl-tRNA(Arg) + AMP + diphosphate. The sequence is that of Arginine--tRNA ligase from Prochlorococcus marinus (strain MIT 9303).